We begin with the raw amino-acid sequence, 539 residues long: Phosphoenolpyruvate carboxykinase (ATP) (539 aa).

Arg-64, Tyr-206, and Lys-212 together coordinate substrate. ATP contacts are provided by residues Lys-212, His-231, and 247–255 (GLSGTGKTT). The Mn(2+) site is built by Lys-212 and His-231. Asp-268 contributes to the Mn(2+) binding site. ATP is bound by residues Glu-296, Arg-332, 448–449 (RI), and Thr-454. Arg-332 is a substrate binding site.

The protein belongs to the phosphoenolpyruvate carboxykinase (ATP) family. Monomer. Mn(2+) serves as cofactor.

The protein localises to the cytoplasm. The enzyme catalyses oxaloacetate + ATP = phosphoenolpyruvate + ADP + CO2. Its pathway is carbohydrate biosynthesis; gluconeogenesis. Involved in the gluconeogenesis. Catalyzes the conversion of oxaloacetate (OAA) to phosphoenolpyruvate (PEP) through direct phosphoryl transfer between the nucleoside triphosphate and OAA. The sequence is that of Phosphoenolpyruvate carboxykinase (ATP) from Yersinia pseudotuberculosis serotype O:1b (strain IP 31758).